The sequence spans 190 residues: Xanthine phosphoribosyltransferase (190 aa).

Positions 20 and 27 each coordinate xanthine. A 5-phospho-alpha-D-ribose 1-diphosphate-binding site is contributed by 128–132; sequence ANGHA. Residue lysine 156 participates in xanthine binding.

Belongs to the purine/pyrimidine phosphoribosyltransferase family. Xpt subfamily. Homodimer.

The protein localises to the cytoplasm. It catalyses the reaction XMP + diphosphate = xanthine + 5-phospho-alpha-D-ribose 1-diphosphate. It functions in the pathway purine metabolism; XMP biosynthesis via salvage pathway; XMP from xanthine: step 1/1. In terms of biological role, converts the preformed base xanthine, a product of nucleic acid breakdown, to xanthosine 5'-monophosphate (XMP), so it can be reused for RNA or DNA synthesis. This Pseudomonas paraeruginosa (strain DSM 24068 / PA7) (Pseudomonas aeruginosa (strain PA7)) protein is Xanthine phosphoribosyltransferase.